The following is a 146-amino-acid chain: Hemoglobin subunit beta (146 aa).

One can recognise a Globin domain in the interval 2-146 (QWAAEEKQLI…VAHALARKYH (145 aa)). Heme b-binding residues include His-63 and His-92.

Belongs to the globin family. As to quaternary structure, heterotetramer of two alpha chains and two beta chains. In terms of tissue distribution, red blood cells.

Involved in oxygen transport from the lung to the various peripheral tissues. The polypeptide is Hemoglobin subunit beta (HBB) (Accipiter gentilis (Northern goshawk)).